The chain runs to 138 residues: Large ribosomal subunit protein bL17 (138 aa).

This sequence belongs to the bacterial ribosomal protein bL17 family. Part of the 50S ribosomal subunit. Contacts protein L32.

This Bradyrhizobium diazoefficiens (strain JCM 10833 / BCRC 13528 / IAM 13628 / NBRC 14792 / USDA 110) protein is Large ribosomal subunit protein bL17.